Here is an 808-residue protein sequence, read N- to C-terminus: Leucine-rich repeat-containing protein 41 (808 aa).

The segment at 45 to 54 is interaction with Elongin BC complex; sequence ALFELCGRAV. Phosphoserine occurs at positions 155, 276, and 326. 2 disordered regions span residues 269 to 289 and 304 to 404; these read ASRG…SRRP and TRRK…GSGA. Position 327 is a phosphothreonine (threonine 327). The span at 357–379 shows a compositional bias: low complexity; sequence PSSAPTAASSSTSSKRAPASSVS. Residue serine 369 is modified to Phosphoserine. Residues 383–397 are compositionally biased toward basic residues; sequence PLKRFKRATGKKGPR. LRR repeat units follow at residues 483–503, 514–526, 527–551, 609–631, 632–655, 697–724, and 727–748; these read WVSL…IFRL, AGCR…LSDL, FSPL…VLSI, SGSL…FGLV, LQTL…LADC, NSTL…VFSE, and SSSL…LLEF.

Part of an E3 ubiquitin-protein ligase complex with Elongin BC (ELOB and ELOC), RBX1 and CUL5. Component of a probable ECS(LRRC41) complex which contains CUL5, RNF7/RBX2, Elongin BC and LRRC41. Interacts with CUL5, RNF7, ELOB and ELOC.

Its pathway is protein modification; protein ubiquitination. In terms of biological role, probable substrate recognition component of an ECS (Elongin BC-CUL2/5-SOCS-box protein) E3 ubiquitin ligase complex which mediates the ubiquitination and subsequent proteasomal degradation of target proteins. The chain is Leucine-rich repeat-containing protein 41 (Lrrc41) from Rattus norvegicus (Rat).